The primary structure comprises 210 residues: DNA dC-&gt;dU-editing enzyme APOBEC-3H (210 aa).

The region spanning 4-126 (LTAKTFSLQF…PNYQEGLLLL (123 aa)) is the CMP/dCMP-type deaminase domain. Zn(2+) is bound at residue His-54. The active-site Proton donor is Glu-56. Residues Cys-85 and Cys-88 each contribute to the Zn(2+) site. Positions 182–210 (SRSVDVLENGLRSLQLGPVTPSSSIRNSR) are necessary and sufficient for localization to the cytoplasm.

It belongs to the cytidine and deoxycytidylate deaminase family. In terms of assembly, homodimer. The cofactor is Zn(2+).

It localises to the cytoplasm. It carries out the reaction a 2'-deoxycytidine in single-stranded DNA + H2O + H(+) = a 2'-deoxyuridine in single-stranded DNA + NH4(+). With respect to regulation, antiviral activity is neutralized by the simian immunodeficiency virus rhesus (SIV-mac) virion infectivity factor (VIF). In terms of biological role, DNA deaminase (cytidine deaminase) which acts as an inhibitor of retrovirus replication and retrotransposon mobility via deaminase-dependent and -independent mechanisms. Exhibits antiviral activity against vif-deficient HIV-1. After the penetration of retroviral nucleocapsids into target cells of infection and the initiation of reverse transcription, it can induce the conversion of cytosine to uracil in the minus-sense single-strand viral DNA, leading to G-to-A hypermutations in the subsequent plus-strand viral DNA. The resultant detrimental levels of mutations in the proviral genome, along with a deamination-independent mechanism that works prior to the proviral integration, together exert efficient antiretroviral effects in infected target cells. Selectively targets single-stranded DNA and does not deaminate double-stranded DNA or single- or double-stranded RNA. This chain is DNA dC-&gt;dU-editing enzyme APOBEC-3H, found in Macaca mulatta (Rhesus macaque).